We begin with the raw amino-acid sequence, 74 residues long: Conotoxin MiEr93 (74 aa).

A signal peptide spans Met1–Ala22. Residues Ala23–Thr45 constitute a propeptide that is removed on maturation. Disulfide bonds link Cys48-Cys62, Cys55-Cys66, and Cys61-Cys73.

This sequence belongs to the conotoxin O1 superfamily. In terms of tissue distribution, expressed by the venom duct.

The protein localises to the secreted. This chain is Conotoxin MiEr93, found in Conus miles (Soldier cone).